Consider the following 636-residue polypeptide: 1-deoxy-D-xylulose-5-phosphate synthase (636 aa).

Thiamine diphosphate contacts are provided by residues His75 and 116-118 (AHS). Asp147 is a Mg(2+) binding site. Residues 148–149 (GA), Asn177, Tyr288, and Glu370 contribute to the thiamine diphosphate site. Residue Asn177 participates in Mg(2+) binding.

This sequence belongs to the transketolase family. DXPS subfamily. As to quaternary structure, homodimer. The cofactor is Mg(2+). Thiamine diphosphate serves as cofactor.

The catalysed reaction is D-glyceraldehyde 3-phosphate + pyruvate + H(+) = 1-deoxy-D-xylulose 5-phosphate + CO2. Its pathway is metabolic intermediate biosynthesis; 1-deoxy-D-xylulose 5-phosphate biosynthesis; 1-deoxy-D-xylulose 5-phosphate from D-glyceraldehyde 3-phosphate and pyruvate: step 1/1. Catalyzes the acyloin condensation reaction between C atoms 2 and 3 of pyruvate and glyceraldehyde 3-phosphate to yield 1-deoxy-D-xylulose-5-phosphate (DXP). The sequence is that of 1-deoxy-D-xylulose-5-phosphate synthase from Ralstonia nicotianae (strain ATCC BAA-1114 / GMI1000) (Ralstonia solanacearum).